The sequence spans 446 residues: Exodeoxyribonuclease 7 large subunit (446 aa).

Belongs to the XseA family. Heterooligomer composed of large and small subunits.

The protein resides in the cytoplasm. The catalysed reaction is Exonucleolytic cleavage in either 5'- to 3'- or 3'- to 5'-direction to yield nucleoside 5'-phosphates.. Bidirectionally degrades single-stranded DNA into large acid-insoluble oligonucleotides, which are then degraded further into small acid-soluble oligonucleotides. The sequence is that of Exodeoxyribonuclease 7 large subunit from Xanthomonas campestris pv. campestris (strain B100).